Reading from the N-terminus, the 206-residue chain is Isochorismatase family protein 1A (206 aa).

The protein belongs to the isochorismatase family.

This Dictyostelium discoideum (Social amoeba) protein is Isochorismatase family protein 1A.